A 371-amino-acid chain; its full sequence is Probable tRNA sulfurtransferase (371 aa).

The THUMP domain occupies 54–156 (NANIEALSEV…NEMTYFYHKV (103 aa)). ATP contacts are provided by residues 174-175 (LF), 199-200 (NF), Lys-254, Gly-276, and Gln-285.

Belongs to the ThiI family.

The protein resides in the cytoplasm. The catalysed reaction is [ThiI sulfur-carrier protein]-S-sulfanyl-L-cysteine + a uridine in tRNA + 2 reduced [2Fe-2S]-[ferredoxin] + ATP + H(+) = [ThiI sulfur-carrier protein]-L-cysteine + a 4-thiouridine in tRNA + 2 oxidized [2Fe-2S]-[ferredoxin] + AMP + diphosphate. The enzyme catalyses [ThiS sulfur-carrier protein]-C-terminal Gly-Gly-AMP + S-sulfanyl-L-cysteinyl-[cysteine desulfurase] + AH2 = [ThiS sulfur-carrier protein]-C-terminal-Gly-aminoethanethioate + L-cysteinyl-[cysteine desulfurase] + A + AMP + 2 H(+). Its pathway is cofactor biosynthesis; thiamine diphosphate biosynthesis. Functionally, catalyzes the ATP-dependent transfer of a sulfur to tRNA to produce 4-thiouridine in position 8 of tRNAs, which functions as a near-UV photosensor. Also catalyzes the transfer of sulfur to the sulfur carrier protein ThiS, forming ThiS-thiocarboxylate. This is a step in the synthesis of thiazole, in the thiamine biosynthesis pathway. The sulfur is donated as persulfide by IscS. In Saccharolobus solfataricus (strain ATCC 35092 / DSM 1617 / JCM 11322 / P2) (Sulfolobus solfataricus), this protein is Probable tRNA sulfurtransferase.